The primary structure comprises 416 residues: Glutamyl-tRNA reductase (416 aa).

Substrate-binding positions include 49–52, S105, 110–112, and Q116; these read TCNR and EPQ. Catalysis depends on C50, which acts as the Nucleophile. An NADP(+)-binding site is contributed by 185-190; sequence GAGETI.

This sequence belongs to the glutamyl-tRNA reductase family. In terms of assembly, homodimer.

The catalysed reaction is (S)-4-amino-5-oxopentanoate + tRNA(Glu) + NADP(+) = L-glutamyl-tRNA(Glu) + NADPH + H(+). The protein operates within porphyrin-containing compound metabolism; protoporphyrin-IX biosynthesis; 5-aminolevulinate from L-glutamyl-tRNA(Glu): step 1/2. Its function is as follows. Catalyzes the NADPH-dependent reduction of glutamyl-tRNA(Glu) to glutamate 1-semialdehyde (GSA). The polypeptide is Glutamyl-tRNA reductase (Shewanella amazonensis (strain ATCC BAA-1098 / SB2B)).